Reading from the N-terminus, the 340-residue chain is Holliday junction branch migration complex subunit RuvB (340 aa).

A large ATPase domain (RuvB-L) region spans residues 1–184 (MNENLDPTNQ…FGIQSRLQYY (184 aa)). Residues leucine 23, arginine 24, glycine 65, lysine 68, threonine 69, threonine 70, 131–133 (EDF), arginine 174, tyrosine 184, and arginine 221 contribute to the ATP site. Threonine 69 serves as a coordination point for Mg(2+). A small ATPAse domain (RuvB-S) region spans residues 185 to 255 (NAELLTTIVQ…IAKFALNALH (71 aa)). The head domain (RuvB-H) stretch occupies residues 258–340 (AHGLDEMDNK…VKANVQGGLF (83 aa)). DNA contacts are provided by arginine 313 and arginine 318.

The protein belongs to the RuvB family. Homohexamer. Forms an RuvA(8)-RuvB(12)-Holliday junction (HJ) complex. HJ DNA is sandwiched between 2 RuvA tetramers; dsDNA enters through RuvA and exits via RuvB. An RuvB hexamer assembles on each DNA strand where it exits the tetramer. Each RuvB hexamer is contacted by two RuvA subunits (via domain III) on 2 adjacent RuvB subunits; this complex drives branch migration. In the full resolvosome a probable DNA-RuvA(4)-RuvB(12)-RuvC(2) complex forms which resolves the HJ.

It is found in the cytoplasm. It carries out the reaction ATP + H2O = ADP + phosphate + H(+). Its function is as follows. The RuvA-RuvB-RuvC complex processes Holliday junction (HJ) DNA during genetic recombination and DNA repair, while the RuvA-RuvB complex plays an important role in the rescue of blocked DNA replication forks via replication fork reversal (RFR). RuvA specifically binds to HJ cruciform DNA, conferring on it an open structure. The RuvB hexamer acts as an ATP-dependent pump, pulling dsDNA into and through the RuvAB complex. RuvB forms 2 homohexamers on either side of HJ DNA bound by 1 or 2 RuvA tetramers; 4 subunits per hexamer contact DNA at a time. Coordinated motions by a converter formed by DNA-disengaged RuvB subunits stimulates ATP hydrolysis and nucleotide exchange. Immobilization of the converter enables RuvB to convert the ATP-contained energy into a lever motion, pulling 2 nucleotides of DNA out of the RuvA tetramer per ATP hydrolyzed, thus driving DNA branch migration. The RuvB motors rotate together with the DNA substrate, which together with the progressing nucleotide cycle form the mechanistic basis for DNA recombination by continuous HJ branch migration. Branch migration allows RuvC to scan DNA until it finds its consensus sequence, where it cleaves and resolves cruciform DNA. In Flavobacterium psychrophilum (strain ATCC 49511 / DSM 21280 / CIP 103535 / JIP02/86), this protein is Holliday junction branch migration complex subunit RuvB.